We begin with the raw amino-acid sequence, 336 residues long: Holliday junction branch migration complex subunit RuvB (336 aa).

The tract at residues 1 to 181 (MDRIVEIEKV…FGMDFRLQFY (181 aa)) is large ATPase domain (RuvB-L). ATP is bound by residues leucine 20, arginine 21, glycine 62, lysine 65, threonine 66, threonine 67, 128 to 130 (EDF), arginine 171, tyrosine 181, and arginine 218. Residue threonine 66 coordinates Mg(2+). A small ATPAse domain (RuvB-S) region spans residues 182–252 (TSSELSRIVQ…RAKEGLNALG (71 aa)). The tract at residues 255–336 (SLGFDEMDIR…KIDIEKGLFE (82 aa)) is head domain (RuvB-H). The DNA site is built by arginine 309 and arginine 314.

The protein belongs to the RuvB family. As to quaternary structure, homohexamer. Forms an RuvA(8)-RuvB(12)-Holliday junction (HJ) complex. HJ DNA is sandwiched between 2 RuvA tetramers; dsDNA enters through RuvA and exits via RuvB. An RuvB hexamer assembles on each DNA strand where it exits the tetramer. Each RuvB hexamer is contacted by two RuvA subunits (via domain III) on 2 adjacent RuvB subunits; this complex drives branch migration. In the full resolvosome a probable DNA-RuvA(4)-RuvB(12)-RuvC(2) complex forms which resolves the HJ.

It is found in the cytoplasm. It carries out the reaction ATP + H2O = ADP + phosphate + H(+). In terms of biological role, the RuvA-RuvB-RuvC complex processes Holliday junction (HJ) DNA during genetic recombination and DNA repair, while the RuvA-RuvB complex plays an important role in the rescue of blocked DNA replication forks via replication fork reversal (RFR). RuvA specifically binds to HJ cruciform DNA, conferring on it an open structure. The RuvB hexamer acts as an ATP-dependent pump, pulling dsDNA into and through the RuvAB complex. RuvB forms 2 homohexamers on either side of HJ DNA bound by 1 or 2 RuvA tetramers; 4 subunits per hexamer contact DNA at a time. Coordinated motions by a converter formed by DNA-disengaged RuvB subunits stimulates ATP hydrolysis and nucleotide exchange. Immobilization of the converter enables RuvB to convert the ATP-contained energy into a lever motion, pulling 2 nucleotides of DNA out of the RuvA tetramer per ATP hydrolyzed, thus driving DNA branch migration. The RuvB motors rotate together with the DNA substrate, which together with the progressing nucleotide cycle form the mechanistic basis for DNA recombination by continuous HJ branch migration. Branch migration allows RuvC to scan DNA until it finds its consensus sequence, where it cleaves and resolves cruciform DNA. This Campylobacter concisus (strain 13826) protein is Holliday junction branch migration complex subunit RuvB.